A 129-amino-acid chain; its full sequence is Ribosome-binding factor A (129 aa).

It belongs to the RbfA family. As to quaternary structure, monomer. Binds 30S ribosomal subunits, but not 50S ribosomal subunits or 70S ribosomes.

It localises to the cytoplasm. Functionally, one of several proteins that assist in the late maturation steps of the functional core of the 30S ribosomal subunit. Associates with free 30S ribosomal subunits (but not with 30S subunits that are part of 70S ribosomes or polysomes). Required for efficient processing of 16S rRNA. May interact with the 5'-terminal helix region of 16S rRNA. The chain is Ribosome-binding factor A from Stutzerimonas stutzeri (strain A1501) (Pseudomonas stutzeri).